The sequence spans 211 residues: uncharacterized protein (211 aa).

Residues 155–211 (AAENASEEGDKKQIITDSGKLPETEELTETTNEDLDIKQFSPYSSESSANVSSYNKS) are disordered. A compositionally biased stretch (acidic residues) spans 178 to 188 (TEELTETTNED). Over residues 195–211 (SPYSSESSANVSSYNKS) the composition is skewed to low complexity.

This is an uncharacterized protein from Schizosaccharomyces pombe (strain 972 / ATCC 24843) (Fission yeast).